A 210-amino-acid chain; its full sequence is Ribosomal RNA large subunit methyltransferase E (210 aa).

The S-adenosyl-L-methionine site is built by G61, W63, D81, D97, and D122. The active-site Proton acceptor is the K162.

This sequence belongs to the class I-like SAM-binding methyltransferase superfamily. RNA methyltransferase RlmE family.

It is found in the cytoplasm. It catalyses the reaction uridine(2552) in 23S rRNA + S-adenosyl-L-methionine = 2'-O-methyluridine(2552) in 23S rRNA + S-adenosyl-L-homocysteine + H(+). Functionally, specifically methylates the uridine in position 2552 of 23S rRNA at the 2'-O position of the ribose in the fully assembled 50S ribosomal subunit. This Xanthomonas oryzae pv. oryzae (strain MAFF 311018) protein is Ribosomal RNA large subunit methyltransferase E.